Reading from the N-terminus, the 551-residue chain is Dihydroxy-acid dehydratase (551 aa).

Asp78 contributes to the Mg(2+) binding site. Cys119 serves as a coordination point for [2Fe-2S] cluster. 2 residues coordinate Mg(2+): Asp120 and Lys121. At Lys121 the chain carries N6-carboxylysine. Residue Cys191 participates in [2Fe-2S] cluster binding. Glu441 is a Mg(2+) binding site. Catalysis depends on Ser467, which acts as the Proton acceptor.

This sequence belongs to the IlvD/Edd family. As to quaternary structure, homodimer. It depends on [2Fe-2S] cluster as a cofactor. The cofactor is Mg(2+).

The enzyme catalyses (2R)-2,3-dihydroxy-3-methylbutanoate = 3-methyl-2-oxobutanoate + H2O. It catalyses the reaction (2R,3R)-2,3-dihydroxy-3-methylpentanoate = (S)-3-methyl-2-oxopentanoate + H2O. The protein operates within amino-acid biosynthesis; L-isoleucine biosynthesis; L-isoleucine from 2-oxobutanoate: step 3/4. It functions in the pathway amino-acid biosynthesis; L-valine biosynthesis; L-valine from pyruvate: step 3/4. Functions in the biosynthesis of branched-chain amino acids. Catalyzes the dehydration of (2R,3R)-2,3-dihydroxy-3-methylpentanoate (2,3-dihydroxy-3-methylvalerate) into 2-oxo-3-methylpentanoate (2-oxo-3-methylvalerate) and of (2R)-2,3-dihydroxy-3-methylbutanoate (2,3-dihydroxyisovalerate) into 2-oxo-3-methylbutanoate (2-oxoisovalerate), the penultimate precursor to L-isoleucine and L-valine, respectively. This Pyrococcus abyssi (strain GE5 / Orsay) protein is Dihydroxy-acid dehydratase.